Consider the following 214-residue polypeptide: CRISPR-associated protein Cas5 (214 aa).

The protein belongs to the CRISPR-associated protein Cas5 family.

In terms of biological role, CRISPR (clustered regularly interspaced short palindromic repeat) is an adaptive immune system that provides protection against mobile genetic elements (viruses, transposable elements and conjugative plasmids). CRISPR clusters contain spacers, sequences complementary to antecedent mobile elements, and target invading nucleic acids. CRISPR clusters are transcribed and processed into CRISPR RNA (crRNA). Functionally, has a role in fruiting body development, sporulation and aggregation. The protein is CRISPR-associated protein Cas5 (devS) of Myxococcus xanthus (strain DK1622).